Here is an 867-residue protein sequence, read N- to C-terminus: Leucine--tRNA ligase (867 aa).

A 'HIGH' region motif is present at residues 42–52; it reads PYPSGKLHMGH. Residues 631-635 carry the 'KMSKS' region motif; the sequence is KMSKS. Lys634 is an ATP binding site.

It belongs to the class-I aminoacyl-tRNA synthetase family.

The protein localises to the cytoplasm. The catalysed reaction is tRNA(Leu) + L-leucine + ATP = L-leucyl-tRNA(Leu) + AMP + diphosphate. The chain is Leucine--tRNA ligase from Dichelobacter nodosus (strain VCS1703A).